A 122-amino-acid polypeptide reads, in one-letter code: Large ribosomal subunit protein uL14 (122 aa).

Belongs to the universal ribosomal protein uL14 family. In terms of assembly, part of the 50S ribosomal subunit. Forms a cluster with proteins L3 and L19. In the 70S ribosome, L14 and L19 interact and together make contacts with the 16S rRNA in bridges B5 and B8.

In terms of biological role, binds to 23S rRNA. Forms part of two intersubunit bridges in the 70S ribosome. This chain is Large ribosomal subunit protein uL14, found in Aeromonas salmonicida (strain A449).